The sequence spans 633 residues: GTPase-GDP dissociation stimulator BEM4 (633 aa).

As to quaternary structure, interacts with CDC42; the interaction is direct. Interacts with RHO1; the interaction is direct. Interacts with RHO2. Interacts with RHO4. Interacts with CDC11.

Its subcellular location is the nucleus. The protein localises to the cytoplasm. Its function is as follows. Probably acts as a GEF (guanine nucleotide exchange factor) for the Rho family of small GTP-binding proteins (G proteins) that stimulates the dissociation of GDP to enable subsequent binding of GTP. May also chaperone the processing and/or trafficking of small GTPases independently of GEF activity. Involved in the control of polarized cell growth via CDC42-mediated signaling. Involved in the control of cell-wall organization via RHO1-mediated signaling. May also function via RHO2 and RHO4. This Saccharomyces cerevisiae (strain ATCC 204508 / S288c) (Baker's yeast) protein is GTPase-GDP dissociation stimulator BEM4.